We begin with the raw amino-acid sequence, 617 residues long: 1-deoxy-D-xylulose-5-phosphate synthase (617 aa).

Residues His80 and 121-123 (GHS) contribute to the thiamine diphosphate site. Asp152 is a Mg(2+) binding site. Thiamine diphosphate-binding positions include 153 to 154 (GA), Asn181, Tyr277, and Glu360. Asn181 is a Mg(2+) binding site.

The protein belongs to the transketolase family. DXPS subfamily. Homodimer. The cofactor is Mg(2+). It depends on thiamine diphosphate as a cofactor.

It catalyses the reaction D-glyceraldehyde 3-phosphate + pyruvate + H(+) = 1-deoxy-D-xylulose 5-phosphate + CO2. Its pathway is metabolic intermediate biosynthesis; 1-deoxy-D-xylulose 5-phosphate biosynthesis; 1-deoxy-D-xylulose 5-phosphate from D-glyceraldehyde 3-phosphate and pyruvate: step 1/1. Its function is as follows. Catalyzes the acyloin condensation reaction between C atoms 2 and 3 of pyruvate and glyceraldehyde 3-phosphate to yield 1-deoxy-D-xylulose-5-phosphate (DXP). This is 1-deoxy-D-xylulose-5-phosphate synthase from Blochmanniella floridana.